A 758-amino-acid chain; its full sequence is UPF0313 protein CV_1738 (758 aa).

The Radical SAM core domain maps to 377–642 (AWEMIKYSVN…VDVVRDGYRR (266 aa)). Cys-391, Cys-395, and Cys-398 together coordinate [4Fe-4S] cluster. Positions 698–758 (GAPMNRGKSP…KPGGKTSRSR (61 aa)) are disordered. Over residues 727 to 737 (RGQGGQGGRPG) the composition is skewed to gly residues.

Belongs to the UPF0313 family. It depends on [4Fe-4S] cluster as a cofactor.

This chain is UPF0313 protein CV_1738, found in Chromobacterium violaceum (strain ATCC 12472 / DSM 30191 / JCM 1249 / CCUG 213 / NBRC 12614 / NCIMB 9131 / NCTC 9757 / MK).